The sequence spans 207 residues: Large ribosomal subunit protein uL3c (207 aa).

Residues 115–151 are disordered; that stretch reads IGKGFAGNQKRHNFSRGPMTHGSKNHRLPGSIGAGST.

The protein belongs to the universal ribosomal protein uL3 family. As to quaternary structure, part of the 50S ribosomal subunit.

Its subcellular location is the plastid. The protein localises to the chloroplast. In terms of biological role, one of the primary rRNA binding proteins, it binds directly near the 3'-end of the 23S rRNA, where it nucleates assembly of the 50S subunit. The protein is Large ribosomal subunit protein uL3c (rpl3) of Emiliania huxleyi (Coccolithophore).